A 215-amino-acid chain; its full sequence is Protein GET1 (215 aa).

Over 1–4 (MINL) the chain is Lumenal. The helical transmembrane segment at 5–24 (ALVIFLCTLLNQIVSWVGKS) threads the bilayer. The Cytoplasmic portion of the chain corresponds to 25-108 (VLQEIAFTAY…SFSKKFSTLL (84 aa)). Residues 73–94 (AKLRRKLDKGLADLEKTNNTLS) adopt a coiled-coil conformation. Residues 109-129 (WLMTTGAQFLLSWWFRKQPIF) traverse the membrane as a helical segment. The Lumenal portion of the chain corresponds to 130–153 (WLPEGWVPYPVAWLLSFPSAPIGS). A helical transmembrane segment spans residues 154–170 (VSSGAWGAICRRVLSTL). Residues 171–215 (QEIIQSVLAPSPAATGPVPTGPSSAKNDQPEAKIEALALEHEKLD) are Cytoplasmic-facing. The segment at 181 to 202 (SPAATGPVPTGPSSAKNDQPEA) is disordered.

It belongs to the WRB/GET1 family. In terms of assembly, interacts with GET3.

It is found in the endoplasmic reticulum membrane. Its function is as follows. Required for the post-translational delivery of tail-anchored (TA) proteins to the endoplasmic reticulum. Acts as a membrane receptor for soluble GET3, which recognizes and selectively binds the transmembrane domain of TA proteins in the cytosol. This is Protein GET1 from Cryptococcus neoformans var. neoformans serotype D (strain B-3501A) (Filobasidiella neoformans).